Consider the following 489-residue polypeptide: Inositol-pentakisphosphate 2-kinase (489 aa).

The short motif at 136–140 (EIKPK) is the EXKPK motif element.

This sequence belongs to the IPK1 type 2 family.

The protein resides in the cytoplasm. It is found in the nucleus. The catalysed reaction is 1D-myo-inositol 1,3,4,5,6-pentakisphosphate + ATP = 1D-myo-inositol hexakisphosphate + ADP + H(+). Functionally, phosphorylates Ins(1,3,4,5,6)P5 at position 2 to form Ins(1,2,3,4,5,6)P6 (InsP6 or phytate). InsP6 is involved in many processes such as mRNA export, non-homologous end-joining, endocytosis, ion channel regulation. It also protects cells from TNF-alpha-induced apoptosis. In Rattus norvegicus (Rat), this protein is Inositol-pentakisphosphate 2-kinase (Ippk).